The sequence spans 256 residues: Cell division protein DivIB (256 aa).

The Cytoplasmic segment spans residues 1–23; sequence MSKDLISTDEYIKIKKKRKRIKK. Residues 24–44 traverse the membrane as a helical segment; that stretch reads IVVLFIFLISILVTLCLKIPY. The 69-residue stretch at 45 to 113 folds into the POTRA domain; it reads FNIESIEIKG…NKLQIYVKER (69 aa). Over 45–256 the chain is Extracellular; it reads FNIESIEIKG…EGNPVFYIEK (212 aa).

Belongs to the FtsQ/DivIB family. DivIB subfamily.

The protein localises to the cell membrane. Cell division protein that may be involved in stabilizing or promoting the assembly of the division complex. This Clostridium botulinum (strain Hall / ATCC 3502 / NCTC 13319 / Type A) protein is Cell division protein DivIB.